The primary structure comprises 109 residues: Spermidine export protein MdtI (109 aa).

Transmembrane regions (helical) follow at residues 6–26 (WIHA…NVFL), 36–56 (VYGI…SQAV), 64–84 (AYAL…WVLF), and 88–108 (LNNK…LIKL).

The protein belongs to the drug/metabolite transporter (DMT) superfamily. Small multidrug resistance (SMR) (TC 2.A.7.1) family. MdtI subfamily. In terms of assembly, forms a complex with MdtJ.

Its subcellular location is the cell inner membrane. In terms of biological role, catalyzes the excretion of spermidine. The polypeptide is Spermidine export protein MdtI (Klebsiella pneumoniae (strain 342)).